The following is a 359-amino-acid chain: Doublesex- and mab-3-related transcription factor B1 (359 aa).

The segment at residues 7–54 is a DNA-binding region (DM); the sequence is CSRCRNHGYLVPVKGHTGKCRWKQCICDKCYLITERQKIMAAQKVLRT. Disordered stretches follow at residues 111-149 and 262-359; these read PPQAPSPGPSTFQLGPSGRPGPSTFQPGPGAPGGLRDRS and SGLV…EQSN. 2 stretches are compositionally biased toward pro residues: residues 277–299 and 315–325; these read CSPPPPPPPPPPPPLPAPPPQPQ and LPPPPPPPSPP. Polar residues predominate over residues 348-359; the sequence is EPSQDSPQEQSN.

Belongs to the DMRT family. As to expression, brain.

The protein resides in the nucleus. The sequence is that of Doublesex- and mab-3-related transcription factor B1 (Dmrtb1) from Mus musculus (Mouse).